The following is a 297-amino-acid chain: Guanylate kinase (297 aa).

Positions 4–183 (GKMIIISGPS…AVAKITDVLH (180 aa)) constitute a Guanylate kinase-like domain. 11–18 (GPSGVGKG) is an ATP binding site. Residues 204 to 297 (EQIVKEKYMY…EQKHYNNDEF (94 aa)) form a unknown region.

It belongs to the guanylate kinase family.

It localises to the cytoplasm. The catalysed reaction is GMP + ATP = GDP + ADP. In terms of biological role, essential for recycling GMP and indirectly, cGMP. In Mycoplasma mycoides subsp. mycoides SC (strain CCUG 32753 / NCTC 10114 / PG1), this protein is Guanylate kinase (gmk).